Consider the following 1850-residue polypeptide: MASTLPPLGGGNGGPHTQHSLPSLPAHLQSDTHITGHLASRFHVSHPTAKLSSHALVCLNTYTSSSKGPDGGKPGSAMAGAEDMADRAWIRLGHRSENQAVVFLGESGSGKSTIRSHLLTALLDKSSTPLSNKLSLAAYVFDSLTTTKTATTPTASKSGLFYELQYDTSATTNPILIGGKLLDHRLERSRIADVPTGERNFHVLYYLLAGTSQAEKTHLGLDDGASGSRRWKYLGHPTQLKVGINDSEGFQLFKTALKKLEFPRSDIAEICQILAAILHIGQLEFESTNNTSATGDDSGGFSHEGGQTSTTVRNKDVLGIIAAFLGVSMADLQSTLGYKTKMIQKERVTVMLDPAGARAHANELARTLYSLLVAWILESVNQRICAPEEDIANTISIVDFPGFAQQTATGSTLDQLLNNAATEAIYNFTLYNFFDRKAEMLESEEVSVAPTSYFDNSDAVKGLLKPGNGLLSILDDQTRRNKTDMQFLESLRKRFEGKNPAIEVGSATAKLPGSNFYTENAAASFTVRHFAGEVEYPVKGLIEENGEVVSVDLLNMFNSTKSEFVGRLFGQDVLQTVNHPIEKSTVMQATISSKPMRAPSVMSRKGGRGRGIASQRRQQESNLFDSGNTHAESRSPKGGNKGGIDQGASGQFLSSLDNVQKAVTDPGTNAYFVFCLKPNDRRIANQFDSKCVRTQVQTFGIAEISQRLRSADFSLFLPFGEFLGMADAETILVGSERERAEMVIEEKRWPSNEVQIGSTGVFLSERCWMEIAGLVDGSAAQGRFALPSSDGYGNDGATPGERDAFGASKEQLLSGGNTPLMYGEKGKPGYFGSDDARSEAGASAIGGGDMFKNFDTREQMAERGNEKNLEEIEEFKDSPSRKRWVFTVYFLTWFIPDFLIRWIGRMPRKDVRMAWREKLAINMLIWFMCLVAAFFIVVFPMLICPKQNVFSAAELSSHNGKDGNSAYVSIRGHVIDLGSFADRHYPSFVSRKTMLNYAGMDVSSLFPVQVSALCQGTDGSVDQTVTLDYKNTNMTGSPALINSQDLNAQYHDFRYFTNDTRPDWYLEQLIMLKGNYGKGTIGYSPEYIAKLGAKRQVIASIGSRVYDLTTYTVGGRRLRTKPGESLPSDPKLADFMDRKVVELFQNQAGGDITKFWNSLALAPDVKARMQTCLDHLFYVGDVDTRNSTRCKFAEYLVLAVSILLVSVIAFKFFAALQFGGKNVPENLDKFVMCQIPAYTEDEDSLRRAIDSAARMRYDDKRKLLVIICDGMIIGQGNDRPTPRIVLDILGVSETVDPEPLSFESLGEGLKQHNMGKVYSGLYEVQGHIVPFLVIVKVGKPSEVARPGNRGKRDSQMILMRFLNRVHYNLAMSPLELEMYHQIRNIIGVNPTFYEFMLQIDADTVVAPDSATRMVSAFLDDTRLIAVCGETALTNAKSSFITMIQVYEYYISHNLSKAFESLFGSVTCLPGCFSMYRIRAAETGKPLFVSREVVDSYATIRVDTLHMKNLLHLGEDRYLTTLLLKYHSKYKTKYLFSAHAWTIAPDSWKVFLSQRRRWINSTVHNLIELIPMAQLCGFCCFSMRFVVFIDLLSTVVQPVTIAYIVYLIVLVATKTTVVPITAFILLGAIYGLQAIIFILRRKWEMVGWMILYVMAVPVFSFGLPLYAFWHMDDFNWGTTRVVAGEKGKKVVISDEGKFDPSSIPRKKWEEYQAELWETQTSRDDSRSEISGISYGTKAQAVVSEYGFPSRPDSTTGFAAHALPYDSRNNSRMSLAHSDMGHHRMSQFGGSQFFNPDDMVGLPSDDALLAEIRDILKTADLMTVTKKGIKQELERRFDVPLDAKRAYINSGK.

The segment at 1-27 (MASTLPPLGGGNGGPHTQHSLPSLPAH) is disordered. In terms of domain architecture, Myosin motor spans 1–779 (MASTLPPLGG…EIAGLVDGSA (779 aa)). Residue 105-112 (GESGSGKS) participates in ATP binding. Residues Asn-245, Asn-290, Asn-427, Asn-481, and Asn-558 are each glycosylated (N-linked (GlcNAc...) asparagine). The interval 289–309 (NNTSATGDDSGGFSHEGGQTS) is disordered. The interval 593-647 (SKPMRAPSVMSRKGGRGRGIASQRRQQESNLFDSGNTHAESRSPKGGNKGGIDQG) is disordered. Over residues 620 to 630 (ESNLFDSGNTH) the composition is skewed to polar residues. The tract at residues 656-680 (LDNVQKAVTDPGTNAYFVFCLKPND) is actin-binding. The next 2 membrane-spanning stretches (helical) occupy residues 884–904 (WVFTVYFLTWFIPDFLIRWIG) and 923–943 (MLIWFMCLVAAFFIVVFPMLI). Residues 947–1006 (QNVFSAAELSSHNGKDGNSAYVSIRGHVIDLGSFADRHYPSFVSRKTMLNYAGMDVSSLF) enclose the Cytochrome b5 heme-binding domain. Residues Asn-1033, Asn-1058, and Asn-1186 are each glycosylated (N-linked (GlcNAc...) asparagine). The chain crosses the membrane as a helical span at residues 1196–1216 (LVLAVSILLVSVIAFKFFAAL). 2 N-linked (GlcNAc...) asparagine glycosylation sites follow: Asn-1453 and Asn-1559. 4 helical membrane passes run 1568–1588 (LIPMAQLCGFCCFSMRFVVFI), 1590–1610 (LLSTVVQPVTIAYIVYLIVLV), 1617–1637 (VPITAFILLGAIYGLQAIIFI), and 1644–1664 (MVGWMILYVMAVPVFSFGLPL). A glycan (N-linked (GlcNAc...) asparagine) is linked at Asn-1767. The DEK-C domain occupies 1800-1850 (LPSDDALLAEIRDILKTADLMTVTKKGIKQELERRFDVPLDAKRAYINSGK).

In the N-terminal section; belongs to the TRAFAC class myosin-kinesin ATPase superfamily. Myosin family. It in the C-terminal section; belongs to the chitin synthase family. Class V subfamily. In terms of tissue distribution, expressed in conidia and during appressorium formation.

The protein resides in the cell membrane. It localises to the cell septum. The protein localises to the cell tip. The enzyme catalyses [(1-&gt;4)-N-acetyl-beta-D-glucosaminyl](n) + UDP-N-acetyl-alpha-D-glucosamine = [(1-&gt;4)-N-acetyl-beta-D-glucosaminyl](n+1) + UDP + H(+). Its function is as follows. Polymerizes chitin, a structural polymer of the cell wall and septum, by transferring the sugar moiety of UDP-GlcNAc to the non-reducing end of the growing chitin polymer. Contributes to the production of conidia and the ability of fungal conidia to germinate. Involved in the fungal cell wall integrity and the ability of conidia to withstand biophysical pressure. Required for appressorium formation and evasion of insect cellular and/or humoral defenses, promoting the fungal dimorphic transition to the production of hyphal bodies that occurs within hosts, and ultimately to virulence. This is Chitin synthase V from Metarhizium acridum (strain CQMa 102).